The chain runs to 37 residues: TFINHKCKSSSECLPACKAAIGRASGKCINSTCKCYY.

2 disulfide bridges follow: Cys-13–Cys-33 and Cys-17–Cys-35.

The protein belongs to the short scorpion toxin superfamily. Potassium channel inhibitor family. Alpha-KTx 04 subfamily. Expressed by the venom gland.

It localises to the secreted. Reversible blocker of voltage-gated potassium channel Kv1.2/KCNA2 (Kd=65 nM) and calcium-activated potassium channels KCa2.2/KCNN2 (Kd=575 nM) and KCa3.1/KCNN4 (Kd=59 nM). The sequence is that of Potassium channel toxin alpha-KTx 4.8 from Centruroides margaritatus (Central American bark Scorpion).